The following is a 705-amino-acid chain: Pentatricopeptide repeat-containing protein At1g09410, mitochondrial (705 aa).

The N-terminal 11 residues, 1–11 (MKSQILLRRTY), are a transit peptide targeting the mitochondrion. 15 PPR repeats span residues 16 to 46 (PPPT…CDSK), 47 to 77 (SISS…MPDR), 78 to 112 (NIIS…NVVS), 113 to 139 (WTAL…MPEK), 140 to 170 (NKVS…IPDK), 171 to 205 (DNIA…SVIT), 206 to 232 (WTTM…MPEK), 233 to 267 (TEVS…PVIA), 268 to 294 (CNAM…MKER), 295 to 329 (NDAS…GVRP), 330 to 364 (TFPT…QFDV), 365 to 395 (DVYV…FPSK), 396 to 430 (DIIM…GSTK), 432 to 462 (NEVT…MESV), and 468 to 498 (ITAH…MTVE). Residues 503 to 578 (VWGSLLGACR…SPGCSWTEVE (76 aa)) are type E motif. Residues 579-610 (NKVHAFTRGGINSHPEQESILKILDELDGLLR) form a type E(+) motif region. The interval 611 to 705 (EAGYNPDCSY…NGECSCKDYW (95 aa)) is type DYW motif.

It belongs to the PPR family. PCMP-H subfamily.

It is found in the mitochondrion. In Arabidopsis thaliana (Mouse-ear cress), this protein is Pentatricopeptide repeat-containing protein At1g09410, mitochondrial (PCMP-H18).